We begin with the raw amino-acid sequence, 2529 residues long: Zinc finger FYVE domain-containing protein 26 (2529 aa).

3 disordered regions span residues 584 to 650, 689 to 709, and 733 to 810; these read HLPE…PGPH, SSHR…SAAR, and VTSN…RFQT. Phosphoserine is present on residues Ser-605 and Ser-609. The span at 689 to 701 shows a compositional bias: basic and acidic residues; that stretch reads SSHRTPEETKLPE. Positions 755-765 are enriched in basic residues; it reads SSLRRGRRTRR. A compositionally biased stretch (low complexity) spans 778–796; that stretch reads SLEGTSSELSTSTSEGSLS. A Phosphoserine modification is found at Ser-791. Residues 797–810 show a composition bias toward polar residues; it reads AVSGQVESDSRFQT. Residues 859 to 884 are a coiled coil; the sequence is MFVERYQEVIQELARVEHKIENQNSD. Positions 1258–1286 are disordered; the sequence is GLPLSTLGSPRPSENPSAERKSHSSPKDS. The span at 1263–1273 shows a compositional bias: polar residues; it reads TLGSPRPSENP. Positions 1274-1283 are enriched in basic and acidic residues; the sequence is SAERKSHSSP. A coiled-coil region spans residues 1488-1515; sequence VSDMAVQEELKSELQRKLMELRVYQKIL. A phosphoserine mark is found at Ser-1732, Ser-1754, Ser-1770, and Ser-1772. A disordered region spans residues 1762-1799; the sequence is APGSALVRSPSPKERAFPQTQPPVEFVPPETPPARDQW. The FYVE-type zinc-finger motif lies at 1802-1862; the sequence is DETESVCMVC…VCDQCYSYYN (61 aa). Cys-1808, Cys-1811, Cys-1825, Cys-1828, Cys-1833, Cys-1836, Cys-1854, and Cys-1857 together coordinate Zn(2+). Residues 1865 to 1884 are disordered; the sequence is TPEESPCQSEVPDSAKNESP.

Belongs to the ZFYVE26 family. As to quaternary structure, interacts with AP5Z1, AP5B1, AP5S1 and SPG11. Interacts with TTC19 and KIF13A.

The protein localises to the cytoplasm. The protein resides in the cytoskeleton. It localises to the microtubule organizing center. Its subcellular location is the centrosome. It is found in the midbody. Functionally, phosphatidylinositol 3-phosphate-binding protein required for the abscission step in cytokinesis: recruited to the midbody during cytokinesis and acts as a regulator of abscission. May also be required for efficient homologous recombination DNA double-strand break repair. The protein is Zinc finger FYVE domain-containing protein 26 (Zfyve26) of Mus musculus (Mouse).